A 167-amino-acid polypeptide reads, in one-letter code: Endoribonuclease YbeY (167 aa).

Zn(2+) is bound by residues H131, H135, and H141.

This sequence belongs to the endoribonuclease YbeY family. It depends on Zn(2+) as a cofactor.

It is found in the cytoplasm. In terms of biological role, single strand-specific metallo-endoribonuclease involved in late-stage 70S ribosome quality control and in maturation of the 3' terminus of the 16S rRNA. This is Endoribonuclease YbeY from Rickettsia conorii (strain ATCC VR-613 / Malish 7).